The following is a 295-amino-acid chain: Transcription factor bHLH19 (295 aa).

In terms of domain architecture, bHLH spans 115–164 (VLAKEHVLAERKRREKLSEKFIALSALLPGLKKADKVTILDDAISRMKQL).

As to quaternary structure, homodimer. Expressed in roots and leaves.

The protein resides in the nucleus. The sequence is that of Transcription factor bHLH19 (BHLH19) from Arabidopsis thaliana (Mouse-ear cress).